Here is a 981-residue protein sequence, read N- to C-terminus: Isoleucine--tRNA ligase (981 aa).

A 'HIGH' region motif is present at residues 50-60; it reads PTTNGMPHVGH. The 'KMSKS' region signature appears at 604 to 608; it reads KMSKS. Position 607 (lysine 607) interacts with ATP.

Belongs to the class-I aminoacyl-tRNA synthetase family. IleS type 2 subfamily. As to quaternary structure, monomer. Zn(2+) serves as cofactor.

It localises to the cytoplasm. It carries out the reaction tRNA(Ile) + L-isoleucine + ATP = L-isoleucyl-tRNA(Ile) + AMP + diphosphate. Catalyzes the attachment of isoleucine to tRNA(Ile). As IleRS can inadvertently accommodate and process structurally similar amino acids such as valine, to avoid such errors it has two additional distinct tRNA(Ile)-dependent editing activities. One activity is designated as 'pretransfer' editing and involves the hydrolysis of activated Val-AMP. The other activity is designated 'posttransfer' editing and involves deacylation of mischarged Val-tRNA(Ile). This is Isoleucine--tRNA ligase from Pyrobaculum aerophilum (strain ATCC 51768 / DSM 7523 / JCM 9630 / CIP 104966 / NBRC 100827 / IM2).